The chain runs to 942 residues: MASVASCDSRPSSDELPGDPSSQEEDEDYDFEDRVSDSGSYSSASSDYDDLEPEWLDSVQKNGELFYLELSEDEEESLLPETPTVNHVRFSENEIIIEDDYKERKKYEPKLKQFTKILRRKRLLPKRCNKKNSNDNGPVSILKHQSNQKTGVIVQQRYKDVNVYVNPKKLTVIKAKEQLKLLEVLVGIIHQTKWSWRRTGKQGDGERLVVHGLLPGGSAMKSGQVLIGDVLVAVNDVDVTTENIERVLSCIPGPMQVKLTFENAYDVKRETSHPRQKKTQSNTSDLVKLLWGEEVEGIQQSGLNTPHIIMYLTLQLDSETSKEEQEILYHYPMSEASQKLKSVRGIFLTLCDMLENVTGTQVTSSSLLLNGKQIHVAYWKESDKLLLIGLPAEEVPLPRLRNMIENVIQTLKFMYGSLDSAFCQIENVPRLDHFFNLFFQRALQPAKLHSSASPSAQQYDASSAVLLDNLPGVRWLTLPLEIKMELDMALSDLEAADFAELSEDYYDMRRLYTILGSSLFYKGYLICSHLPKDDLIDIAVYCRHYCLLPLAAKQRIGQLIIWREVFPQHHLRPLADSSTEVFPEPEGRYFLLVVGLKHYMLCVLLEAGGCASKAIGSPGPDCVYVDQVKTTLHQLDGVDSRIDERLASSPVPCLSCADWFLTGSREKTDSLTTSPILSRLQGTSKVATSPTCRRTLFGDYSLKTRKPSPSCSSGGSDNGCEGGEDDGFSPHTTPDAVRKQRESQGSDGLEESGTLLKVTKKKSTLPNPFHLGNLKKDLPEKELEIYNTVKLTSGPENTLFHYVALETVQGIFITPTLEEVAQLSGSIHPQLIKNFHQCCLSIRAVFQQTLVEEKKKGLNSGDHSDSAKSVSSLNPVKEHGVLFECSPGNWTDQKKAPPVMAYWVVGRLFLHPKPQELYVCFHDSVTEIAIEIAFKLFFGLTL.

The interval 1–52 (MASVASCDSRPSSDELPGDPSSQEEDEDYDFEDRVSDSGSYSSASSDYDDLE) is disordered. Acidic residues predominate over residues 22-31 (SQEEDEDYDF). Over residues 37-46 (DSGSYSSASS) the composition is skewed to low complexity. In terms of domain architecture, PDZ spans 185–263 (LVGIIHQTKW…PMQVKLTFEN (79 aa)). Phosphoserine is present on residues Ser-670 and Ser-674. Residues 704–754 (TRKPSPSCSSGGSDNGCEGGEDDGFSPHTTPDAVRKQRESQGSDGLEESGT) form a disordered region.

The protein belongs to the inturned family. As to quaternary structure, component of the CPLANE (ciliogenesis and planar polarity effectors) complex, composed of INTU, FUZ and WDPCP. Interacts with CPLANE1. Interacts with NPHP4 and DAAM1; INTU is mediating the interaction between NPHP4 and DAAM1.

The protein resides in the cytoplasm. It localises to the cell surface. Its subcellular location is the cytoskeleton. It is found in the cilium basal body. The protein localises to the microtubule organizing center. The protein resides in the centrosome. It localises to the centriole. Functionally, plays a key role in ciliogenesis and embryonic development. Regulator of cilia formation by controlling the organization of the apical actin cytoskeleton and the positioning of the basal bodies at the apical cell surface, which in turn is essential for the normal orientation of elongating ciliary microtubules. Plays a key role in definition of cell polarity via its role in ciliogenesis but not via conversion extension. Has an indirect effect on hedgehog signaling. Proposed to function as core component of the CPLANE (ciliogenesis and planar polarity effectors) complex involved in the recruitment of peripheral IFT-A proteins to basal bodies. Required for recruitment of CPLANE2 to the mother centriole. Binds phosphatidylinositol 3-phosphate with highest affinity, followed by phosphatidylinositol 4-phosphate and phosphatidylinositol 5-phosphate. The sequence is that of Protein inturned (INTU) from Homo sapiens (Human).